The sequence spans 80 residues: Large ribosomal subunit protein bL31B (80 aa).

Belongs to the bacterial ribosomal protein bL31 family. Type B subfamily. Part of the 50S ribosomal subunit.

In Xylella fastidiosa (strain M23), this protein is Large ribosomal subunit protein bL31B.